The following is a 276-amino-acid chain: Ribosomal RNA small subunit methyltransferase A (276 aa).

Asn-28, Leu-30, Gly-55, Glu-77, Asp-103, and Asn-124 together coordinate S-adenosyl-L-methionine.

It belongs to the class I-like SAM-binding methyltransferase superfamily. rRNA adenine N(6)-methyltransferase family. RsmA subfamily.

The protein localises to the cytoplasm. The enzyme catalyses adenosine(1518)/adenosine(1519) in 16S rRNA + 4 S-adenosyl-L-methionine = N(6)-dimethyladenosine(1518)/N(6)-dimethyladenosine(1519) in 16S rRNA + 4 S-adenosyl-L-homocysteine + 4 H(+). Specifically dimethylates two adjacent adenosines (A1518 and A1519) in the loop of a conserved hairpin near the 3'-end of 16S rRNA in the 30S particle. May play a critical role in biogenesis of 30S subunits. The chain is Ribosomal RNA small subunit methyltransferase A from Agrobacterium fabrum (strain C58 / ATCC 33970) (Agrobacterium tumefaciens (strain C58)).